Here is a 129-residue protein sequence, read N- to C-terminus: uncharacterized protein (129 aa).

Positions 44-63 are disordered; it reads PYRAADRSNDQDNDRSGGNV. Residues 46–58 are compositionally biased toward basic and acidic residues; it reads RAADRSNDQDNDR. 2 helical membrane-spanning segments follow: residues 78-98 and 109-129; these read IISLFVLPVLLGAAGIIVGYI and AWAMGIGVVSLVLGIFIIPFF.

Its subcellular location is the cell membrane. This is an uncharacterized protein from Bacillus subtilis (strain 168).